Consider the following 165-residue polypeptide: Nucleotide-binding protein P9515_05441 (165 aa).

Belongs to the YajQ family.

In terms of biological role, nucleotide-binding protein. The polypeptide is Nucleotide-binding protein P9515_05441 (Prochlorococcus marinus (strain MIT 9515)).